Reading from the N-terminus, the 535-residue chain is Probable inorganic phosphate transporter 1-7 (535 aa).

Residues 1–24 (MAGDQLNVLNALDVAKTQWYHFTA) lie on the Cytoplasmic side of the membrane. Residues 25 to 45 (IIIAGMGFFTDAYDLFCISLV) form a helical membrane-spanning segment. The Extracellular portion of the chain corresponds to 46 to 70 (TKLLGRIYYHVDGSEKPGTLPPNVS). The helical transmembrane segment at 71–91 (AAVNGVAFCGTLAGQLFFGWL) threads the bilayer. At 92–99 (GDKLGRKK) the chain is on the cytoplasmic side. The helical transmembrane segment at 100–120 (VYGMTLMVMVLCSIASGLSFG) threads the bilayer. The Extracellular segment spans residues 121-131 (SNPKTVMTTLC). The helical transmembrane segment at 132–152 (FFRFWLGFGIGGDYPLSATIM) threads the bilayer. Residues 153–161 (SEYANKKTR) are Cytoplasmic-facing. A helical membrane pass occupies residues 162-182 (GAFIAAVFAMQGFGILTGGIF). The Extracellular segment spans residues 183–211 (AIIVSAAFEAKFPAPTYQIDALASTVPQA). Residues 212–232 (DYVWRIILMVGALPAAMTYYS) form a helical membrane-spanning segment. Topologically, residues 233–289 (RSKMPETARYTALVAKDAKLAASNMSKVLQVEIEAEQQGTEDKSNSFGLFSKEFMKR) are cytoplasmic. The chain crosses the membrane as a helical span at residues 290–310 (HGLHLLGTTSTWFLLDIAFYS). Residues 311–345 (QNLFQKDIFSAIGWIPPAQTMNAIQEVFKIARAQT) lie on the Extracellular side of the membrane. Residues 346-366 (LIALCSTVPGYWFTVAFIDVI) form a helical membrane-spanning segment. The Cytoplasmic portion of the chain corresponds to 367–368 (GR). A helical membrane pass occupies residues 369-389 (FAIQMMGFFFMTVFMFALAIP). Residues 390–399 (YDHWTHKENR) lie on the Extracellular side of the membrane. A helical transmembrane segment spans residues 400–420 (IGFVAMYSLTFFFANFGPNAT). Residues 421 to 438 (TFVVPAEIFPARFRSTCH) are Cytoplasmic-facing. A helical membrane pass occupies residues 439 to 459 (GISAASGKLGAMVGAFGFLYL). The Extracellular segment spans residues 460-480 (AQSPDKTKTEHGYPPGIGVKN). Residues 481 to 501 (SLIVLGVVNLLGMVFTLLVPE) traverse the membrane as a helical segment. Over 502–535 (SKGKSLEEMSGENEQNDESSSSSNNNSNNAVSTA) the chain is Cytoplasmic. The tract at residues 506 to 535 (SLEEMSGENEQNDESSSSSNNNSNNAVSTA) is disordered. Over residues 519–535 (ESSSSSNNNSNNAVSTA) the composition is skewed to low complexity. S520 carries the phosphoserine modification.

The protein belongs to the major facilitator superfamily. Phosphate:H(+) symporter (TC 2.A.1.9) family. Mature pollen.

The protein resides in the membrane. Functionally, high-affinity transporter for external inorganic phosphate. The chain is Probable inorganic phosphate transporter 1-7 (PHT1-7) from Arabidopsis thaliana (Mouse-ear cress).